The primary structure comprises 357 residues: Guanine nucleotide-binding protein alpha-1 subunit (357 aa).

The N-myristoyl glycine moiety is linked to residue G2. C4 is lipidated: S-palmitoyl cysteine. A G-alpha domain is found at 32-357 (NVIKLLLLGA…SSKLKGCGLF (326 aa)). The tract at residues 35–48 (KLLLLGAGESGKST) is G1 motif. The GTP site is built by E43, S44, G45, K46, S47, T48, D151, L176, T182, G204, N270, K271, D273, and A329. S47 lines the Mg(2+) pocket. Residues 174–182 (DILHTRVPT) are G2 motif. Position 182 (T182) interacts with Mg(2+). Residues 197-206 (FRVFDVGGQR) are G3 motif. The segment at 266 to 273 (ILFLNKVD) is G4 motif. The tract at residues 327 to 332 (TCATDT) is G5 motif.

It belongs to the G-alpha family. G(q) subfamily. G proteins are composed of 3 units; alpha, beta and gamma. The alpha chain contains the guanine nucleotide binding site. It depends on Mg(2+) as a cofactor.

In terms of biological role, guanine nucleotide-binding proteins (G proteins) are involved as modulators or transducers in various transmembrane signaling systems. This chain is Guanine nucleotide-binding protein alpha-1 subunit (gpa-1), found in Caenorhabditis briggsae.